The sequence spans 434 residues: Protein maelstrom homolog (434 aa).

Positions 4–73 (RRASRNAYYF…AQGKDSGPSE (70 aa)) form a DNA-binding region, HMG box.

The protein belongs to the maelstrom family. Interacts with SMARCB1, SIN3B and DDX4. Interacts with piRNA-associated proteins TDRD1, PIWIL1 and PIWIL2. Interacts with Tex19.1 and, probably, Tex19.2. In terms of tissue distribution, testis-specific. Present in spermatocytes and round and early elongating spermatids.

It is found in the cytoplasm. The protein resides in the nucleus. In terms of biological role, plays a central role during spermatogenesis by repressing transposable elements and preventing their mobilization, which is essential for the germline integrity. Acts via the piRNA metabolic process, which mediates the repression of transposable elements during meiosis by forming complexes composed of piRNAs and Piwi proteins and governs the methylation and subsequent repression of transposons. Its association with piP-bodies suggests a participation in the secondary piRNAs metabolic process. Required for the localization of germ-cell factors to the meiotic nuage. In Mus musculus (Mouse), this protein is Protein maelstrom homolog.